Consider the following 547-residue polypeptide: MTAKDIIFDSDARAKLKVGVDKLANAVKVTLGPAGRNVLIDKKFGAPTSTKDGVTVAKEIELADAVENMGAQMVREVASKTSDVAGDGTTTATVLAQAIYREGLKNVAAGARPIDLKRGIDRAVKEVVAELRNISRSISGKKEIAQVGTISANNDPEIGELIAEAMDKVGKDGVITVEEAKGMDTELKVVEGMQFDRGYLSPYFVTNPETMEAEIEDPLILIHDKKIGNMKELLPILEKSAQSGRPLLIIAEDIEGEALATLVVNKLRGTLKVCAVKAPGFGDRRKAMLEDIAILTGGTVISEEKGYKLENATLAYLGQAGRVNIDKDNTTIVEGKGTQEDIKARINEIKGQIDKSTSDYDTEKLQERLAKLSGGVAVLNIGASTEVEMKEKKARVEDALHATRAAVQEGIVVGGGVALIRAIKGLANAVADNEDQKTGIEIIRRALEEPLRQIVANTGTTDGAVVLEKVKAAEGDFGFNARTEQYENLVEAGVVDPTKVTRSALENAASVASILLTTEAAITDIKEEKSDMPAMPPGGMGGMGGMY.

Residues 30-33 (TLGP), K51, 87-91 (DGTTT), G415, and D496 each bind ATP.

This sequence belongs to the chaperonin (HSP60) family. As to quaternary structure, forms a cylinder of 14 subunits composed of two heptameric rings stacked back-to-back. Interacts with the co-chaperonin GroES.

It localises to the cytoplasm. The catalysed reaction is ATP + H2O + a folded polypeptide = ADP + phosphate + an unfolded polypeptide.. Functionally, together with its co-chaperonin GroES, plays an essential role in assisting protein folding. The GroEL-GroES system forms a nano-cage that allows encapsulation of the non-native substrate proteins and provides a physical environment optimized to promote and accelerate protein folding. The chain is Chaperonin GroEL from Chlorobium limicola (strain DSM 245 / NBRC 103803 / 6330).